Consider the following 196-residue polypeptide: dTDP-4-dehydro-6-deoxyglucose 3-epimerase (196 aa).

Substrate is bound by residues Arg-21, Glu-26, 45–47 (QVN), and Arg-57. His-60 acts as the Proton acceptor in catalysis. Substrate is bound by residues Lys-70 and Arg-117. Tyr-130 (proton donor) is an active-site residue. Residues Glu-141 and Arg-166 each coordinate substrate.

Belongs to the dTDP-4-dehydrorhamnose 3,5-epimerase family. In terms of assembly, homodimer.

It carries out the reaction dTDP-4-dehydro-6-deoxy-alpha-D-glucose = dTDP-4-dehydro-6-deoxy-alpha-D-allose. The protein operates within antibiotic biosynthesis. Functionally, involved in the biosynthesis of dTDP-6-deoxy-D-allose, an intermediate in the biosynthesis of mycinose, which is one of the two unusual sugars attached to the 16-membered macrolactone ring of the aglycone antibiotic dihydrochalcomycin (GERI-155). Catalyzes the conversion of dTDP-4-oxo-6-deoxyglucose to dTDP-4-oxo-6-deoxyallose, via a C-3 epimerization. The polypeptide is dTDP-4-dehydro-6-deoxyglucose 3-epimerase (Streptomyces sp).